We begin with the raw amino-acid sequence, 209 residues long: Uracil phosphoribosyltransferase (209 aa).

5-phospho-alpha-D-ribose 1-diphosphate-binding positions include Arg-79, Arg-104, and 131 to 139 (DPMLATGGS). Uracil is bound by residues Ile-194 and 199–201 (GDA). Position 200 (Asp-200) interacts with 5-phospho-alpha-D-ribose 1-diphosphate.

The protein belongs to the UPRTase family. Requires Mg(2+) as cofactor.

The enzyme catalyses UMP + diphosphate = 5-phospho-alpha-D-ribose 1-diphosphate + uracil. The protein operates within pyrimidine metabolism; UMP biosynthesis via salvage pathway; UMP from uracil: step 1/1. Its activity is regulated as follows. Allosterically activated by GTP. Catalyzes the conversion of uracil and 5-phospho-alpha-D-ribose 1-diphosphate (PRPP) to UMP and diphosphate. The chain is Uracil phosphoribosyltransferase from Enterococcus faecalis (strain ATCC 700802 / V583).